The primary structure comprises 55 residues: Large ribosomal subunit protein bL33 (55 aa).

Belongs to the bacterial ribosomal protein bL33 family.

In Bradyrhizobium sp. (strain BTAi1 / ATCC BAA-1182), this protein is Large ribosomal subunit protein bL33.